The sequence spans 168 residues: Oleosin 18.2 kDa (168 aa).

Residue Ala2 is modified to N-acetylalanine. The polar stretch occupies residues 2–45 (AEVRDRNLPHQVQVHPQYRLDNTTGGGYGAKNYHSGPSTSQVLA). 3 helical membrane-spanning segments follow: residues 43 to 63 (VLAV…AGLT), 76 to 96 (PLFI…AMAV), and 97 to 117 (TGFL…SYVL). Residues 46–117 (VLTLLPIGGT…TGLSSLSYVL (72 aa)) are hydrophobic.

It belongs to the oleosin family.

It localises to the lipid droplet. It is found in the membrane. Its function is as follows. May have a structural role to stabilize the lipid body during desiccation of the seed by preventing coalescence of the oil. Probably interacts with both lipid and phospholipid moieties of lipid bodies. May also provide recognition signals for specific lipase anchorage in lipolysis during seedling growth. This is Oleosin 18.2 kDa (MATP6-A) from Gossypium hirsutum (Upland cotton).